We begin with the raw amino-acid sequence, 652 residues long: tRNA-guanine(15) transglycosylase (652 aa).

Aspartate 88 serves as the catalytic Nucleophile. Positions 123 and 194 each coordinate substrate. Residues cysteine 280, cysteine 282, and cysteine 285 each contribute to the Zn(2+) site. Residues 577–652 form the PUA domain; it reads KYRVVIDSEV…AAVSVRSGFK (76 aa).

This sequence belongs to the archaeosine tRNA-ribosyltransferase family. The cofactor is Zn(2+).

The enzyme catalyses guanosine(15) in tRNA + 7-cyano-7-deazaguanine = 7-cyano-7-carbaguanosine(15) in tRNA + guanine. It functions in the pathway tRNA modification; archaeosine-tRNA biosynthesis. Functionally, exchanges the guanine residue with 7-cyano-7-deazaguanine (preQ0) at position 15 in the dihydrouridine loop (D-loop) of archaeal tRNAs. The protein is tRNA-guanine(15) transglycosylase of Methanococcus aeolicus (strain ATCC BAA-1280 / DSM 17508 / OCM 812 / Nankai-3).